Consider the following 247-residue polypeptide: MAHEGHSQHSGLVWALRPILAWIFLVACGWSHPLQTRSWGHPGLAAKVRTGQLQPAGHPQSSVLPSYPRIQVPGSQTPPVPVPCCTAEIDRPESLLESCGAPSPECEFFLGQLQGALRDRFHPQLFGARPVQPLCPELCQIWFTTCQADFICGPTWLQSSGERGCEPSCRTYGQTFANATDLCHSVLGHVLRVAAPGSSHCLNVSISSPGARRRPRAWISNVVGSGSGSGSGDSPEPMFGFQYVSLP.

Positions M1 to S31 are cleaved as a signal peptide. Intrachain disulfides connect C99–C169, C106–C146, C139–C183, and C152–C165.

Belongs to the folate receptor family. In terms of processing, not N-glycosylated. In terms of tissue distribution, expressed in the peripheral retina where it localizes to the inter-photoreceptor matrix (at protein level). May be produced by rod photoreceptors (at protein level).

It localises to the secreted. Its subcellular location is the extracellular space. The protein resides in the extracellular matrix. It is found in the interphotoreceptor matrix. The protein localises to the cell membrane. Its function is as follows. Riboflavin-binding protein which might have a role in retinal flavin transport. The protein is Retbindin (Rtbdn) of Mus musculus (Mouse).